Here is a 329-residue protein sequence, read N- to C-terminus: MASQLTDAFARKFYYLRLSITDVCNFRCTYCLPDGYKPGGVTNNGFLTVDEIRRVTRAFASLGTEKVRLTGGEPSLRRDFTDIIAAVGENDAIRQIAVTTNGYRLARDAANWREAGLTGVNVSVDSLDARQFHAITGQDKFRQVMAGIDAAFDAGFEKVKVNTVLMRDVNHHQLDTFLAWIQPRPIQLRFIELMETGEGSDLFRKHHISGQVLRDELIKRGWIHQLRQRSDGPAQVFCHPDYAGEIGLIMPYEKDFCATCNRLRVSSVGKLHLCLFGDGGVSLRDLLQDDAQQYALEERISDALREKKQTHFLHQSNTGITQNLSYIGG.

The 227-residue stretch at 8 to 234 (AFARKFYYLR…QLRQRSDGPA (227 aa)) folds into the Radical SAM core domain. A GTP-binding site is contributed by Arg17. Residues Cys24 and Cys28 each contribute to the [4Fe-4S] cluster site. Tyr30 is a binding site for S-adenosyl-L-methionine. Cys31 serves as a coordination point for [4Fe-4S] cluster. Arg68 lines the GTP pocket. Gly72 lines the S-adenosyl-L-methionine pocket. Thr99 lines the GTP pocket. S-adenosyl-L-methionine is bound at residue Ser123. Lys160 is a GTP binding site. Met194 contributes to the S-adenosyl-L-methionine binding site. [4Fe-4S] cluster-binding residues include Cys257 and Cys260. A GTP-binding site is contributed by 262–264 (RLR). Position 274 (Cys274) interacts with [4Fe-4S] cluster.

It belongs to the radical SAM superfamily. MoaA family. Monomer and homodimer. [4Fe-4S] cluster serves as cofactor.

The catalysed reaction is GTP + AH2 + S-adenosyl-L-methionine = (8S)-3',8-cyclo-7,8-dihydroguanosine 5'-triphosphate + 5'-deoxyadenosine + L-methionine + A + H(+). It participates in cofactor biosynthesis; molybdopterin biosynthesis. In terms of biological role, catalyzes the cyclization of GTP to (8S)-3',8-cyclo-7,8-dihydroguanosine 5'-triphosphate. The sequence is that of GTP 3',8-cyclase from Salmonella newport (strain SL254).